The chain runs to 351 residues: Transcription factor bHLH93 (351 aa).

A bHLH domain is found at 174-223; the sequence is GQPSKNLMAERRRRKRLNDRLSMLRSIVPKISKMDRTSILGDAIDYMKEL.

Homodimer. Interacts with FAMA. As to expression, broadly expressed.

The protein resides in the nucleus. In terms of biological role, transcription factor. May be involved in the differentiation of stomatal guard cells. The chain is Transcription factor bHLH93 (BHLH93) from Arabidopsis thaliana (Mouse-ear cress).